Reading from the N-terminus, the 564-residue chain is MSNSAFNRRWAELLLEALTRHGLRHVCIAPGSRSTPLTIAAAANNKLICHTHFDERGLGHLALGLSKASREPVAVIVTSGTAVANLYPSLIEASLTGERMVFLTADRPPELMDCGANQAIRQNGIFASHPCQTISLPRPTVDIPASWLASVIDHSMANLQHGAVHINCPFAEPLYGNEEPAYDEWQQQLGDWWKSKTPWLSQPVAKVVAEVPDWDCWQQKKGVVLAGRMSAEEGVNVAKWAKALSWPLIGNALSQTGQPLPCADLWLDNPHVQEILAQAQLVVQFGSSLIGKCLLQWQAKCQPQEFWIIDPIPGRLDPANHRGKKLTCHIADWLLAHPAQPCIPWAQSCTLWAEELIVWSEKAVNCVRTELAGKFGEATVAYRLRELLPERGQLFVGNSLIIRLIDTLGQLPAGYPVYSNRGASGIDGLISTAAGVQRATAKPTLAVIGDLSALYDLNSLALLRHPSAPMVLIVVNNNGGQIFSLLPTQEEARQRFYCMPQYVNFDHAAAMFGLKYASPQNWMELQQSIKQAWQQNETTLIELKVPDREGAECLQQLLKQVAML.

This sequence belongs to the TPP enzyme family. MenD subfamily. As to quaternary structure, homodimer. Mg(2+) serves as cofactor. Mn(2+) is required as a cofactor. The cofactor is thiamine diphosphate.

It carries out the reaction isochorismate + 2-oxoglutarate + H(+) = 5-enolpyruvoyl-6-hydroxy-2-succinyl-cyclohex-3-ene-1-carboxylate + CO2. It functions in the pathway quinol/quinone metabolism; 1,4-dihydroxy-2-naphthoate biosynthesis; 1,4-dihydroxy-2-naphthoate from chorismate: step 2/7. Its pathway is quinol/quinone metabolism; menaquinone biosynthesis. In terms of biological role, catalyzes the thiamine diphosphate-dependent decarboxylation of 2-oxoglutarate and the subsequent addition of the resulting succinic semialdehyde-thiamine pyrophosphate anion to isochorismate to yield 2-succinyl-5-enolpyruvyl-6-hydroxy-3-cyclohexene-1-carboxylate (SEPHCHC). The chain is 2-succinyl-5-enolpyruvyl-6-hydroxy-3-cyclohexene-1-carboxylate synthase from Photorhabdus laumondii subsp. laumondii (strain DSM 15139 / CIP 105565 / TT01) (Photorhabdus luminescens subsp. laumondii).